Here is a 384-residue protein sequence, read N- to C-terminus: tRNA-specific 2-thiouridylase MnmA (384 aa).

ATP contacts are provided by residues 13-20 (GLSGGVDS) and Met39. An interaction with target base in tRNA region spans residues 99–101 (NPD). Cys104 (nucleophile) is an active-site residue. A disulfide bridge connects residues Cys104 and Cys215. Residue Gly128 participates in ATP binding. The interaction with tRNA stretch occupies residues 165–167 (KDQ). Catalysis depends on Cys215, which acts as the Cysteine persulfide intermediate. The tract at residues 333 to 334 (RY) is interaction with tRNA.

It belongs to the MnmA/TRMU family.

It localises to the cytoplasm. It catalyses the reaction S-sulfanyl-L-cysteinyl-[protein] + uridine(34) in tRNA + AH2 + ATP = 2-thiouridine(34) in tRNA + L-cysteinyl-[protein] + A + AMP + diphosphate + H(+). In terms of biological role, catalyzes the 2-thiolation of uridine at the wobble position (U34) of tRNA, leading to the formation of s(2)U34. The polypeptide is tRNA-specific 2-thiouridylase MnmA (Albidiferax ferrireducens (strain ATCC BAA-621 / DSM 15236 / T118) (Rhodoferax ferrireducens)).